Reading from the N-terminus, the 689-residue chain is Calcium-responsive transcription factor (689 aa).

Disordered stretches follow at residues 1–46 and 541–609; these read MEQR…PTIL and SPDG…SVPN. Positions 13-29 are enriched in basic and acidic residues; it reads DGEKSEREAQGFEHRTC. 2 stretches are compositionally biased toward polar residues: residues 541 to 559 and 578 to 601; these read SPDG…SSSP and LGQS…SSTG.

As to expression, highly expressed in brain and testis.

The protein localises to the nucleus. Its function is as follows. Acts as a transcriptional activator that mediates the calcium- and neuron-selective induction of BDNF exon III transcription. Binds to the consensus calcium-response element CaRE1 5'-CTATTTCGAG-3' sequence. This is Calcium-responsive transcription factor (Carf) from Mus musculus (Mouse).